We begin with the raw amino-acid sequence, 241 residues long: Protein McbE (241 aa).

6 helical membrane passes run 17–35 (TPFS…FFFL), 54–72 (ISWF…NYCL), 105–123 (LIMS…LTGF), 131–149 (IVMI…MVSL), 163–181 (STIY…IVSL), and 212–230 (LMTI…ISAL).

The protein localises to the cell membrane. Its function is as follows. Together with two further proteins McbF and McbG this protein causes immunity to the peptide antibiotic microcin B17 (MccB17), which inhibits DNA replication in enterobacteriaceae. Immunity is determined by two different mechanisms. McbE is involved in the production of extracellular MccB17 and, in a complex with McbF it also serves as 'pump' for the export of active MccB17 from the cytoplasm to the periplasmic space. This is Protein McbE (mcbE) from Escherichia coli.